A 369-amino-acid chain; its full sequence is Putative esterase slr0264 (369 aa).

Catalysis depends on charge relay system residues serine 162, aspartate 303, and histidine 334.

The protein belongs to the AB hydrolase superfamily. AB hydrolase 4 family.

The chain is Putative esterase slr0264 from Synechocystis sp. (strain ATCC 27184 / PCC 6803 / Kazusa).